A 295-amino-acid chain; its full sequence is Protease Rv3090 (295 aa).

2 helical membrane passes run Thr2–Trp22 and Val37–Val57.

It is found in the cell membrane. Its subcellular location is the secreted. The protein localises to the cell wall. Functionally, protease that triggers late cell apoptosis and contributes to the pathogenicity and dissemination of M.tuberculosis. In a mouse model of infection, can induce hepatocyte and lung cell apoptosis and cause pathological damage to the spleen, liver and lungs. Specifically stimulates the secretion of inflammatory cytokines including TNF-alpha, IL-6 and IL-1 beta. Can degrade casein in vitro. The polypeptide is Protease Rv3090 (Mycobacterium tuberculosis (strain ATCC 25618 / H37Rv)).